The sequence spans 391 residues: Na(+)/H(+) antiporter NhaA 1 (391 aa).

The next 11 membrane-spanning stretches (helical) occupy residues 25–45 (AGGI…NSPL), 56–76 (VWLG…IFFL), 98–118 (ALPG…YIAI), 128–148 (GWAI…SLLG), 157–177 (VFLA…IAFF), 180–200 (AGLN…LIVM), 208–228 (LLPY…SGVH), 264–284 (VAFA…LAGI), 297–317 (VALG…VLAI), 335–355 (GVAM…NLAF), and 364–384 (EVKV…IVLL).

It belongs to the NhaA Na(+)/H(+) (TC 2.A.33) antiporter family.

The protein resides in the cell inner membrane. The enzyme catalyses Na(+)(in) + 2 H(+)(out) = Na(+)(out) + 2 H(+)(in). Its function is as follows. Na(+)/H(+) antiporter that extrudes sodium in exchange for external protons. The chain is Na(+)/H(+) antiporter NhaA 1 from Pseudomonas syringae pv. syringae (strain B728a).